Here is a 790-residue protein sequence, read N- to C-terminus: uncharacterized protein (790 aa).

In terms of domain architecture, TBDR plug spans 37-172 (APVPVPVNGN…NGGVIDAKIK (136 aa)). The 613-residue stretch at 178–790 (DSKVKLGYRT…TFWLDVSMKF (613 aa)) folds into the TBDR beta-barrel domain.

The protein belongs to the TonB-dependent receptor family.

It is found in the cell outer membrane. This is an uncharacterized protein from Escherichia coli (strain K12).